The chain runs to 155 residues: Probable calcium-binding protein CML9 (155 aa).

EF-hand domains follow at residues 8–43, 86–121, and 122–155; these read EQVD…LGQN, ATEK…HGDR, and LTEE…MNNK. Residues Asp21, Asp23, Asp25, Arg27, and Glu32 each contribute to the Ca(2+) site.

Functionally, potential calcium sensor. The sequence is that of Probable calcium-binding protein CML9 (CML9) from Oryza sativa subsp. japonica (Rice).